The chain runs to 275 residues: HUWE1-associated protein modifying stress responses (275 aa).

Positions 32–44 are enriched in acidic residues; it reads AEQDEQLSPELQE. Disordered regions lie at residues 32 to 51, 155 to 181, 204 to 228, and 250 to 275; these read AEQDEQLSPELQEEAAAAAQ, RNSRAPPRLTVVSPNRATSTETSSSVE, SVRSSTPGSPTHVSSGPNASRRRNG, and GTRKRTSAQCGDVITDSPTHKRNRML. Residue serine 167 is modified to Phosphoserine. Over residues 172 to 181 the composition is skewed to low complexity; it reads TSTETSSSVE. Polar residues predominate over residues 204-221; sequence SVRSSTPGSPTHVSSGPN. At serine 212 the chain carries Phosphoserine.

This sequence belongs to the HAPSTR1 family. As to quaternary structure, homooligomer. Heterooligomer with HAPSTR2; the interaction is direct and stabilizes HAPSTR1. Interacts with HUWE1. Post-translationally, ubiquitinated by HUWE1. Promotes HAPSTR1 degradation through polyubiquitination.

The protein resides in the nucleus. The protein localises to the cytoplasm. Acts as a central player within a network of stress response pathways promoting cellular adaptability. The E3 ligase HUWE1 assists HAPSTR1 in controlling stress signaling and in turn, HUWE1 feeds back to promote the degradation of HAPSTR1. HAPSTR1 represents a central coordination mechanism for stress response programs. Functions as a negative regulator of TP53/P53 in the cellular response to telomere erosion and probably also DNA damage. May attenuate p53/TP53 activation through the E3 ubiquitin ligase HUWE1. The sequence is that of HUWE1-associated protein modifying stress responses from Mus musculus (Mouse).